Here is a 307-residue protein sequence, read N- to C-terminus: D-alanine--D-alanine ligase (307 aa).

The 190-residue stretch at Lys110–Leu299 folds into the ATP-grasp domain. Pro136 to Thr185 is a binding site for ATP. Mg(2+) contacts are provided by Asp253, Glu266, and Asn268.

This sequence belongs to the D-alanine--D-alanine ligase family. It depends on Mg(2+) as a cofactor. Mn(2+) serves as cofactor.

The protein localises to the cytoplasm. It catalyses the reaction 2 D-alanine + ATP = D-alanyl-D-alanine + ADP + phosphate + H(+). The protein operates within cell wall biogenesis; peptidoglycan biosynthesis. Cell wall formation. The sequence is that of D-alanine--D-alanine ligase from Alcanivorax borkumensis (strain ATCC 700651 / DSM 11573 / NCIMB 13689 / SK2).